We begin with the raw amino-acid sequence, 226 residues long: 2-C-methyl-D-erythritol 4-phosphate cytidylyltransferase (226 aa).

It belongs to the IspD/TarI cytidylyltransferase family. IspD subfamily.

It carries out the reaction 2-C-methyl-D-erythritol 4-phosphate + CTP + H(+) = 4-CDP-2-C-methyl-D-erythritol + diphosphate. The protein operates within isoprenoid biosynthesis; isopentenyl diphosphate biosynthesis via DXP pathway; isopentenyl diphosphate from 1-deoxy-D-xylulose 5-phosphate: step 2/6. Functionally, catalyzes the formation of 4-diphosphocytidyl-2-C-methyl-D-erythritol from CTP and 2-C-methyl-D-erythritol 4-phosphate (MEP). The chain is 2-C-methyl-D-erythritol 4-phosphate cytidylyltransferase from Clostridium beijerinckii (strain ATCC 51743 / NCIMB 8052) (Clostridium acetobutylicum).